The sequence spans 444 residues: MIETSQTIPELVSWAKDREFSLNLPTERLVFLLAIAIYNNERLDGEMLEADLVDIFRHTMNAFEQSTDAIATRANNAINELVKQRLLNRFSSEFTEGLAIYRLTPLGVGVSDYYIRQREFSALRLSVQLSIVADEIQRASDSAEEGVENNENEHYWRRNVFAPLKYSVAEIFDSIDLSQRIMDENQQSIKDEIAELLTKDWQAAISSCERLLDETSGNLRELQDTLNAAGDKLQAQLLRIQDCVIGRDDLYFIDQLITDLQSKLDRIISWGQQAIDLWIGYDRHVHKFIRTAIDMDKNRVFSQRLRNSIHHYFDHPWFLWTAQAERLVDLRDEEMVLREDDALGELPEELQYESLSDLHDQIVEHMQGLLIAYRENNRPIDLSLVLKEQLENYPLSRHFDVARIIVDQAVRLGMANDDLSGIYPDWQAINKRGAEVQAHVIDKY.

A leucine-zipper region spans residues 212–240 (LDETSGNLRELQDTLNAAGDKLQAQLLRI).

The protein belongs to the MukF family. As to quaternary structure, interacts, and probably forms a ternary complex, with MukE and MukB via its C-terminal region. The complex formation is stimulated by calcium or magnesium. It is required for an interaction between MukE and MukB.

The protein localises to the cytoplasm. The protein resides in the nucleoid. Functionally, involved in chromosome condensation, segregation and cell cycle progression. May participate in facilitating chromosome segregation by condensation DNA from both sides of a centrally located replisome during cell division. Not required for mini-F plasmid partitioning. Probably acts via its interaction with MukB and MukE. Overexpression results in anucleate cells. It has a calcium binding activity. The sequence is that of Chromosome partition protein MukF from Haemophilus influenzae (strain ATCC 51907 / DSM 11121 / KW20 / Rd).